We begin with the raw amino-acid sequence, 209 residues long: Urease accessory protein UreG (209 aa).

Residue 11 to 18 (GPVGSGKT) coordinates GTP.

The protein belongs to the SIMIBI class G3E GTPase family. UreG subfamily. As to quaternary structure, homodimer. UreD, UreF and UreG form a complex that acts as a GTP-hydrolysis-dependent molecular chaperone, activating the urease apoprotein by helping to assemble the nickel containing metallocenter of UreC. The UreE protein probably delivers the nickel.

It is found in the cytoplasm. Its function is as follows. Facilitates the functional incorporation of the urease nickel metallocenter. This process requires GTP hydrolysis, probably effectuated by UreG. The sequence is that of Urease accessory protein UreG from Edwardsiella ictaluri (strain 93-146).